Reading from the N-terminus, the 399-residue chain is Homocysteine-responsive endoplasmic reticulum-resident ubiquitin-like domain member 2 protein (399 aa).

Residues 10 to 89 form the Ubiquitin-like domain; the sequence is VTLVIKAPNQ…HMVHLVCASR (80 aa). Disordered regions lie at residues 88–144 and 211–250; these read SRTP…SIRH and ASNQ…APEM. The span at 95–106 shows a compositional bias: polar residues; it reads PKASTSNKSMGT. Positions 107–124 are enriched in low complexity; sequence ASISRSSSEHSGSASPAS. Over residues 211 to 221 the composition is skewed to polar residues; the sequence is ASNQSPSNGEN. Positions 234–246 are enriched in pro residues; it reads SPPPNPPRAPPNV. The helical transmembrane segment at 299–319 threads the bilayer; the sequence is FVMVMGAMILVYMHQAGWFPL.

Its subcellular location is the membrane. In terms of biological role, could be involved in the unfolded protein response (UPR) pathway. This chain is Homocysteine-responsive endoplasmic reticulum-resident ubiquitin-like domain member 2 protein (herpud2), found in Xenopus tropicalis (Western clawed frog).